The primary structure comprises 620 residues: Threonine--tRNA ligase (620 aa).

The editing domain stretch occupies residues 1 to 141 (MKMLLIHSDY…LSRKIVAKEE (141 aa)). The catalytic stretch occupies residues 197 to 496 (PHVKFIKEKD…AEKGNAPMLP (300 aa)). Cys-289, His-341, and His-465 together coordinate Zn(2+).

Belongs to the class-II aminoacyl-tRNA synthetase family. Homodimer. Zn(2+) is required as a cofactor.

It is found in the cytoplasm. It catalyses the reaction tRNA(Thr) + L-threonine + ATP = L-threonyl-tRNA(Thr) + AMP + diphosphate + H(+). With respect to regulation, not inhibited by 1 uM borrelidin (BN); probably does not bind BN. Functionally, catalyzes the attachment of threonine to tRNA(Thr) in a two-step reaction: L-threonine is first activated by ATP to form Thr-AMP and then transferred to the acceptor end of tRNA(Thr). Also activates L-serine, but does not detectably transfer it to tRNA(Thr). Edits incorrectly charged L-seryl-tRNA(Thr) via its editing domain. Has no activity on correctly acylated L-seryl-tRNA(Ser) or L-threonyl-tRNA(Thr). Deacylates correctly charged glycyl-tRNA(Gly), but not glycyl-tRNA(Gly)(2'-dA76) (the terminal 2'-OH of tRNA adenine 76 has been dehydroxylated) nor the 2'-fluoro tRNA derivative, strongly suggesting the editing function is tRNA catalyzed. The chain is Threonine--tRNA ligase from Methanocaldococcus jannaschii (strain ATCC 43067 / DSM 2661 / JAL-1 / JCM 10045 / NBRC 100440) (Methanococcus jannaschii).